Reading from the N-terminus, the 504-residue chain is Cobyric acid synthase (504 aa).

The 189-residue stretch at 254–442 (AIDVAVIRYP…MHDLFHNDMF (189 aa)) folds into the GATase cobBQ-type domain. C336 (nucleophile) is an active-site residue. Residue H434 is part of the active site.

The protein belongs to the CobB/CobQ family. CobQ subfamily.

Its pathway is cofactor biosynthesis; adenosylcobalamin biosynthesis. Functionally, catalyzes amidations at positions B, D, E, and G on adenosylcobyrinic A,C-diamide. NH(2) groups are provided by glutamine, and one molecule of ATP is hydrogenolyzed for each amidation. This Anoxybacillus flavithermus (strain DSM 21510 / WK1) protein is Cobyric acid synthase.